The primary structure comprises 481 residues: Sialic acid-binding Ig-like lectin 16 (481 aa).

The first 16 residues, 1–16 (MLLLPLLLPVLGAGSL), serve as a signal peptide directing secretion. Over 17-434 (NKDPSYSLQV…VHCKSGPMTG (418 aa)) the chain is Extracellular. Residues 19 to 122 (DPSYSLQVQR…DEAWYFFRVE (104 aa)) enclose the Ig-like V-type domain. Cystine bridges form between Cys-37–Cys-174, Cys-42–Cys-102, Cys-165–Cys-216, and Cys-259–Cys-306. 2 N-linked (GlcNAc...) asparagine glycosylation sites follow: Asn-43 and Asn-78. Arg-120 serves as a coordination point for N-acetylneuraminate. Ig-like C2-type domains follow at residues 147-232 (PDVY…RTVR), 238-322 (LELQ…LDLS), and 327-424 (PENL…LSFS). 2 N-linked (GlcNAc...) asparagine glycosylation sites follow: Asn-338 and Asn-347. A disulfide bond links Cys-363 and Cys-408. Residues 435 to 455 (VVLVAVGEVAMKILLLCLCLI) form a helical membrane-spanning segment. The Cytoplasmic portion of the chain corresponds to 456–481 (LLRVRSCRRKAARAALGMEAADAVTD).

Belongs to the immunoglobulin superfamily. SIGLEC (sialic acid binding Ig-like lectin) family. In terms of tissue distribution, expressed in bone marrow, fetal brain, fetal liver, lung and salivary gland. Detected in brain, macrophage, cancerous esophagus and lung at protein level.

The protein localises to the membrane. Putative adhesion molecule that mediates sialic-acid dependent binding to cells. The sequence is that of Sialic acid-binding Ig-like lectin 16 (SIGLEC16) from Homo sapiens (Human).